The sequence spans 94 residues: Small ribosomal subunit protein bS16c (94 aa).

This sequence belongs to the bacterial ribosomal protein bS16 family.

Its subcellular location is the plastid. It is found in the chloroplast. This Phalaenopsis aphrodite subsp. formosana (Moth orchid) protein is Small ribosomal subunit protein bS16c.